Reading from the N-terminus, the 340-residue chain is Ketol-acid reductoisomerase (NADP(+)) (340 aa).

Positions 3–183 (VNIYYDKDCD…GGGRTGIIET (181 aa)) constitute a KARI N-terminal Rossmann domain. Residues 26-29 (FGSQ), Ser54, and 84-87 (DELQ) contribute to the NADP(+) site. His109 is an active-site residue. Gly135 lines the NADP(+) pocket. The KARI C-terminal knotted domain occupies 184 to 329 (TFKDETETDL…KKLRAMMPWI (146 aa)). Mg(2+) is bound by residues Asp192, Glu196, Glu228, and Glu232. Ser253 provides a ligand contact to substrate.

This sequence belongs to the ketol-acid reductoisomerase family. It depends on Mg(2+) as a cofactor.

The catalysed reaction is (2R)-2,3-dihydroxy-3-methylbutanoate + NADP(+) = (2S)-2-acetolactate + NADPH + H(+). The enzyme catalyses (2R,3R)-2,3-dihydroxy-3-methylpentanoate + NADP(+) = (S)-2-ethyl-2-hydroxy-3-oxobutanoate + NADPH + H(+). The protein operates within amino-acid biosynthesis; L-isoleucine biosynthesis; L-isoleucine from 2-oxobutanoate: step 2/4. It participates in amino-acid biosynthesis; L-valine biosynthesis; L-valine from pyruvate: step 2/4. Functionally, involved in the biosynthesis of branched-chain amino acids (BCAA). Catalyzes an alkyl-migration followed by a ketol-acid reduction of (S)-2-acetolactate (S2AL) to yield (R)-2,3-dihydroxy-isovalerate. In the isomerase reaction, S2AL is rearranged via a Mg-dependent methyl migration to produce 3-hydroxy-3-methyl-2-ketobutyrate (HMKB). In the reductase reaction, this 2-ketoacid undergoes a metal-dependent reduction by NADPH to yield (R)-2,3-dihydroxy-isovalerate. In Campylobacter curvus (strain 525.92), this protein is Ketol-acid reductoisomerase (NADP(+)).